A 315-amino-acid chain; its full sequence is DNA-directed RNA polymerase subunit alpha (315 aa).

Residues 1–228 are alpha N-terminal domain (alpha-NTD); sequence MLEIEKPKIE…EHFKLFMTLT (228 aa). The alpha C-terminal domain (alpha-CTD) stretch occupies residues 245–315; that stretch reads KEKVLEMTIE…LGLGLRKSED (71 aa).

The protein belongs to the RNA polymerase alpha chain family. Homodimer. The RNAP catalytic core consists of 2 alpha, 1 beta, 1 beta' and 1 omega subunit. When a sigma factor is associated with the core the holoenzyme is formed, which can initiate transcription.

It carries out the reaction RNA(n) + a ribonucleoside 5'-triphosphate = RNA(n+1) + diphosphate. DNA-dependent RNA polymerase catalyzes the transcription of DNA into RNA using the four ribonucleoside triphosphates as substrates. The polypeptide is DNA-directed RNA polymerase subunit alpha (Clostridium botulinum (strain Langeland / NCTC 10281 / Type F)).